Here is a 121-residue protein sequence, read N- to C-terminus: Copper transport protein CCH (121 aa).

The residue at position 2 (Ala-2) is an N-acetylalanine. The HMA domain maps to 2–65; sequence AQTVVLKVGM…TVSKTGKKTS (64 aa). Positions 13 and 16 each coordinate Cu cation. The disordered stretch occupies residues 70–121; it reads EAEAEPKAEADPKVETVTETKTEAETKTEAKVDAKADVEPKAAEAETKPSQV. The span at 73 to 121 shows a compositional bias: basic and acidic residues; it reads AEPKAEADPKVETVTETKTEAETKTEAKVDAKADVEPKAAEAETKPSQV.

This sequence belongs to the ATX1 family. Cu cation is required as a cofactor. In terms of tissue distribution, expressed in phloem (at protein level).

Functionally, involved in copper homeostasis. Can complement the yeast mutants atx1 and sod1. The protein is Copper transport protein CCH (CCH) of Arabidopsis thaliana (Mouse-ear cress).